We begin with the raw amino-acid sequence, 44 residues long: Photosystem I reaction center subunit IX (44 aa).

Residues 7 to 27 (YLSVAPVLSTLWFGALAGLLI) traverse the membrane as a helical segment.

The protein belongs to the PsaJ family.

The protein localises to the plastid. It is found in the chloroplast thylakoid membrane. May help in the organization of the PsaE and PsaF subunits. The sequence is that of Photosystem I reaction center subunit IX from Coffea arabica (Arabian coffee).